The chain runs to 222 residues: Zinc finger C2HC domain-containing protein 1B (222 aa).

The C2HC/C3H-type 1 zinc finger occupies 14 to 43 (ELFPCEVCGRRFAADVLERHGPICKKLFNR). 4 residues coordinate Zn(2+): Cys18, Cys21, His33, and Cys37. Positions 48-78 (FSSLKQRLQGTDIPTVKKTPQSKSPPVRKSN) are disordered. A C2HC/C3H-type 2; degenerate zinc finger spans residues 117 to 146 (DYIQRPYCMRRFNESAAERHTNFCKDQSSR). The tract at residues 196–222 (PTKSGLAMDPASGAKLRQGFSKSSKKD) is disordered.

The protein belongs to the ZC2HC1 family. Zn(2+) is required as a cofactor.

In Homo sapiens (Human), this protein is Zinc finger C2HC domain-containing protein 1B (ZC2HC1B).